Consider the following 204-residue polypeptide: Putative uracil phosphoribosyltransferase urg2 (204 aa).

Residues R75, R100, and 126–134 (DPVMATGGT) each bind 5-phospho-alpha-D-ribose 1-diphosphate. Position 187 (Y187) interacts with D-ribose 5-phosphate. Residues L188 and 193 to 195 (GDI) contribute to the uracil site. Residue D194 coordinates 5-phospho-alpha-D-ribose 1-diphosphate.

The protein belongs to the UPRTase family. Mg(2+) serves as cofactor.

It is found in the cytoplasm. Its subcellular location is the nucleus. The catalysed reaction is UMP + diphosphate = 5-phospho-alpha-D-ribose 1-diphosphate + uracil. The protein operates within pyrimidine metabolism; UMP biosynthesis via salvage pathway; UMP from uracil: step 1/1. Its activity is regulated as follows. Allosterically activated by GTP. In terms of biological role, catalyzes the conversion of uracil and 5-phospho-alpha-D-ribose 1-diphosphate (PRPP) to UMP and diphosphate. The sequence is that of Putative uracil phosphoribosyltransferase urg2 from Schizosaccharomyces pombe (strain 972 / ATCC 24843) (Fission yeast).